The sequence spans 236 residues: Biosynthetic peptidoglycan transglycosylase (236 aa).

Residues 12 to 31 (ALLWFAAGSALVVLVLRWVP) traverse the membrane as a helical segment.

This sequence belongs to the glycosyltransferase 51 family.

The protein resides in the cell inner membrane. It catalyses the reaction [GlcNAc-(1-&gt;4)-Mur2Ac(oyl-L-Ala-gamma-D-Glu-L-Lys-D-Ala-D-Ala)](n)-di-trans,octa-cis-undecaprenyl diphosphate + beta-D-GlcNAc-(1-&gt;4)-Mur2Ac(oyl-L-Ala-gamma-D-Glu-L-Lys-D-Ala-D-Ala)-di-trans,octa-cis-undecaprenyl diphosphate = [GlcNAc-(1-&gt;4)-Mur2Ac(oyl-L-Ala-gamma-D-Glu-L-Lys-D-Ala-D-Ala)](n+1)-di-trans,octa-cis-undecaprenyl diphosphate + di-trans,octa-cis-undecaprenyl diphosphate + H(+). The protein operates within cell wall biogenesis; peptidoglycan biosynthesis. Its function is as follows. Peptidoglycan polymerase that catalyzes glycan chain elongation from lipid-linked precursors. This Pseudomonas syringae pv. tomato (strain ATCC BAA-871 / DC3000) protein is Biosynthetic peptidoglycan transglycosylase.